Consider the following 328-residue polypeptide: Dolichyl-diphosphooligosaccharide--protein glycosyltransferase subunit MAGT1 (328 aa).

The N-terminal stretch at 1-22 (MAALPVLVLVLLLACGGPRAAG) is a signal peptide. Topologically, residues 23-177 (QKRKEMVLSE…DVNIRVIRPP (155 aa)) are extracellular. The Thioredoxin domain maps to 40 to 168 (WTSKRSVIRM…LARWVADRTD (129 aa)). An N-linked (GlcNAc...) asparagine glycan is attached at asparagine 64. A disulfide bridge connects residues cysteine 80 and cysteine 83. A helical transmembrane segment spans residues 178–198 (NYAGPLMLGLLLAVIGGLVYL). Residues 199-211 (RGSNLDFLYNKTG) lie on the Cytoplasmic side of the membrane. Residues 212–232 (WAFAALCFVLAMTSGQMWNHI) traverse the membrane as a helical segment. Over 233–257 (RGPPYAHKNPHTGQVNYIHGSSQAQ) the chain is Extracellular. Residues 258–278 (FVAETHIVLLFNGGVTLGMVL) form a helical membrane-spanning segment. Topologically, residues 279–293 (LHEAATSDMDVGKRK) are cytoplasmic. The chain crosses the membrane as a helical span at residues 294-314 (IMCIAGIGLVVFFFSWLLSVF). At 315-328 (RSKYHGYPYSFLMS) the chain is on the extracellular side.

The protein belongs to the OST3/OST6 family. In terms of assembly, accessory component of the STT3B-containing form of the oligosaccharyltransferase (OST) complex. OST exists in two different complex forms which contain common core subunits RPN1, RPN2, OST48, OST4, DAD1 and TMEM258, either STT3A or STT3B as catalytic subunits, and form-specific accessory subunits. OST can form stable complexes with the Sec61 complex or with both the Sec61 and TRAP complexes.

The protein localises to the cell membrane. Its subcellular location is the endoplasmic reticulum. It localises to the endoplasmic reticulum membrane. It functions in the pathway protein modification; protein glycosylation. In terms of biological role, accessory component of the STT3B-containing form of the N-oligosaccharyl transferase (OST) complex which catalyzes the transfer of a high mannose oligosaccharide from a lipid-linked oligosaccharide donor to an asparagine residue within an Asn-X-Ser/Thr consensus motif in nascent polypeptide chains. Involved in N-glycosylation of STT3B-dependent substrates. Specifically required for the glycosylation of a subset of acceptor sites that are near cysteine residues; in this function seems to act redundantly with TUSC3. In its oxidized form proposed to form transient mixed disulfides with a glycoprotein substrate to facilitate access of STT3B to the unmodified acceptor site. Also has oxidoreductase-independent functions in the STT3B-containing OST complex possibly involving substrate recognition. Could indirectly play a role in Mg(2+) transport in epithelial cells. In Gallus gallus (Chicken), this protein is Dolichyl-diphosphooligosaccharide--protein glycosyltransferase subunit MAGT1.